The sequence spans 166 residues: 3-isopropylmalate dehydratase small subunit (166 aa).

Belongs to the LeuD family. LeuD type 2 subfamily. Heterodimer of LeuC and LeuD.

The catalysed reaction is (2R,3S)-3-isopropylmalate = (2S)-2-isopropylmalate. Its pathway is amino-acid biosynthesis; L-leucine biosynthesis; L-leucine from 3-methyl-2-oxobutanoate: step 2/4. Catalyzes the isomerization between 2-isopropylmalate and 3-isopropylmalate, via the formation of 2-isopropylmaleate. The sequence is that of 3-isopropylmalate dehydratase small subunit from Caldicellulosiruptor bescii (strain ATCC BAA-1888 / DSM 6725 / KCTC 15123 / Z-1320) (Anaerocellum thermophilum).